A 335-amino-acid chain; its full sequence is MIEKIWFENHPVKYLLWPLLWPLSLLFGAISRRQKAAYQRGAKASFQASIPVIVVGNITAGGNGKTPVVIWLVEKLQQLGFKPGVVSRGYGAKAPVYPMVVDSESLTSHCGDEPKLIFERTGALVAVDPIRPNAVKRLIELGANIIVTDDGLQHYALQRDIEVVVVDGQRRFGNQQLIPLGPLREPTSRLQNVDFIITNGGDAHQGEIAMSLMPDMAVNLMTGEKVAVNELASLVAFAGIGHPPRFFKTLEQLGADVVVSQGFADHQDFDPEAIAKLAHQGKNVIMTEKDAVKCRRFAQNNWWYLPVSAQFSSHDQQRILQRITEVVKEYGSSTA.

59-66 contributes to the ATP binding site; sequence TAGGNGKT.

The protein belongs to the LpxK family.

The enzyme catalyses a lipid A disaccharide + ATP = a lipid IVA + ADP + H(+). It functions in the pathway glycolipid biosynthesis; lipid IV(A) biosynthesis; lipid IV(A) from (3R)-3-hydroxytetradecanoyl-[acyl-carrier-protein] and UDP-N-acetyl-alpha-D-glucosamine: step 6/6. Its function is as follows. Transfers the gamma-phosphate of ATP to the 4'-position of a tetraacyldisaccharide 1-phosphate intermediate (termed DS-1-P) to form tetraacyldisaccharide 1,4'-bis-phosphate (lipid IVA). The chain is Tetraacyldisaccharide 4'-kinase from Vibrio vulnificus (strain YJ016).